We begin with the raw amino-acid sequence, 188 residues long: Probable manganese efflux pump MntP (188 aa).

5 helical membrane passes run Ile3–Gly23, Leu66–Ile86, Trp106–Phe128, Ala143–Gly163, and Ile168–Gly188.

Belongs to the MntP (TC 9.B.29) family.

Its subcellular location is the cell inner membrane. Probably functions as a manganese efflux pump. This chain is Probable manganese efflux pump MntP, found in Escherichia fergusonii (strain ATCC 35469 / DSM 13698 / CCUG 18766 / IAM 14443 / JCM 21226 / LMG 7866 / NBRC 102419 / NCTC 12128 / CDC 0568-73).